A 100-amino-acid polypeptide reads, in one-letter code: MQVLVRDNNVDQALKALKKKMQREGIFREMKLRGHYEKPSEKKAREKAEAVRRARKLARKKLQREGLLPMKPKPVFGAGPGGDRGRGPAAGAGAGPRGPR.

Residues 61–100 (KLQREGLLPMKPKPVFGAGPGGDRGRGPAAGAGAGPRGPR) form a disordered region. Gly residues predominate over residues 78-100 (AGPGGDRGRGPAAGAGAGPRGPR).

This sequence belongs to the bacterial ribosomal protein bS21 family.

This Rhodopseudomonas palustris (strain BisB18) protein is Small ribosomal subunit protein bS21.